The primary structure comprises 542 residues: Sterile alpha motif domain-containing protein 11 (542 aa).

Residues 268-364 (LLALPPQGPP…GRGLLSGSTL (97 aa)) form a disordered region. A compositionally biased stretch (pro residues) spans 273 to 285 (PQGPPGPGPPIPP). Threonine 342 bears the Phosphothreonine mark. An SAM domain is found at 404 to 469 (WTVDDVCNFV…AQVAKRLGRV (66 aa)). The disordered stretch occupies residues 486-542 (LQAPELSPGHQPLSPATTTSPYEGTHLPTGQASPKQENGSGTIALLSGAPDPSQLLQ). Serine 499 carries the phosphoserine modification. Polar residues predominate over residues 499–526 (SPATTTSPYEGTHLPTGQASPKQENGSG).

As to quaternary structure, self-associates. Component of a Polycomb group (PcG) multiprotein PRC1-like complex. Interacts with SAMD7 and PHC2. As to expression, expressed in the outer nuclear layer of rod photoreceptors in the retina (at protein level). Predominantly expressed in retinal photoreceptors and pineal gland.

It is found in the nucleus. Functionally, component of a Polycomb group (PcG) multiprotein PRC1-like complex, essential for establishing rod photoreceptor cell identity and function by silencing nonrod gene expression in developing rod photoreceptor cells. This is Sterile alpha motif domain-containing protein 11 (Samd11) from Mus musculus (Mouse).